The following is a 713-amino-acid chain: Endopolyphosphatase (713 aa).

Topologically, residues 1–19 are cytoplasmic; it reads MSVLIDEKSHRSSGSTRSR. Residues 20 to 40 traverse the membrane as a helical; Signal-anchor for type II membrane protein segment; sequence IVVTVVGVLLMVSGLAVMLGH. Residues 41-713 are Vacuolar-facing; sequence QSGSANEALG…SSEYENMGMG (673 aa). Positions 399–418 are enriched in acidic residues; sequence SDDDDNSDSDSDDDDEDTSL. The disordered stretch occupies residues 399–430; it reads SDDDDNSDSDSDDDDEDTSLEESYSNFNSPIL. N-linked (GlcNAc...) asparagine glycans are attached at residues asparagine 507 and asparagine 645. Residues 640–659 are compositionally biased toward basic residues; sequence VKEKKNKSNKKSKKKKKNKD. A disordered region spans residues 640-684; sequence VKEKKNKSNKKSKKKKKNKDKRLLENSEPLKQDGSKDSRLEQDRV. Residues 660-683 are compositionally biased toward basic and acidic residues; that stretch reads KRLLENSEPLKQDGSKDSRLEQDR.

Belongs to the endopolyphosphatase PPN1 family. A divalent metal cation is required as a cofactor. Post-translationally, processing by proteases in the vacuole may be required for activation.

The protein resides in the vacuole membrane. The enzyme catalyses [phosphate](n+1) + n H2O = (n+1) phosphate + n H(+). In terms of biological role, catalyzes the hydrolysis of inorganic polyphosphate (polyP) chains of many hundreds of phosphate residues into shorter lengths. This chain is Endopolyphosphatase (PPN1), found in Debaryomyces hansenii (strain ATCC 36239 / CBS 767 / BCRC 21394 / JCM 1990 / NBRC 0083 / IGC 2968) (Yeast).